The primary structure comprises 262 residues: Origin recognition complex subunit 6 (262 aa).

A disordered region spans residues Ala-197–Glu-217. A Glycyl lysine isopeptide (Lys-Gly) (interchain with G-Cter in SUMO2) cross-link involves residue Lys-221. Thr-239 carries the post-translational modification Phosphothreonine.

The protein belongs to the ORC6 family. Component of ORC, a complex composed of at least 6 subunits: ORC1, ORC2, ORC3, ORC4, ORC5 and ORC6. ORC is regulated in a cell-cycle dependent manner. It is sequentially assembled at the exit from anaphase of mitosis and disassembled as cells enter S phase. Interacts with DBF4.

Its subcellular location is the nucleus. Component of the origin recognition complex (ORC) that binds origins of replication. DNA-binding is ATP-dependent. The specific DNA sequences that define origins of replication have not been identified yet. ORC is required to assemble the pre-replication complex necessary to initiate DNA replication. The polypeptide is Origin recognition complex subunit 6 (Orc6) (Mus musculus (Mouse)).